A 335-amino-acid chain; its full sequence is Serine/threonine-protein kinase crk1 (335 aa).

One can recognise a Protein kinase domain in the interval tyrosine 11–phenylalanine 292. Residues valine 17–valine 25 and lysine 40 each bind ATP. Aspartate 133 functions as the Proton acceptor in the catalytic mechanism. At serine 162 the chain carries Phosphoserine. Phosphoserine; by CAK is present on serine 165. Serine 318 carries the phosphoserine modification.

The protein belongs to the protein kinase superfamily. CMGC Ser/Thr protein kinase family. CDC2/CDKX subfamily. In terms of assembly, one of the nine subunits forming the core-TFIIH basal transcription factor. Interacts with mcs2 and tfb3.

The protein localises to the cytoplasm. The protein resides in the nucleus. The catalysed reaction is [DNA-directed RNA polymerase] + ATP = phospho-[DNA-directed RNA polymerase] + ADP + H(+). Its function is as follows. Protein kinase essential for cell proliferation, where it is required for completion of cytokinesis. Phosphorylates the C-terminal repeat domain (CTD) of RNA polymerase II. The protein is Serine/threonine-protein kinase crk1 (crk1) of Schizosaccharomyces pombe (strain 972 / ATCC 24843) (Fission yeast).